The following is a 56-amino-acid chain: Putative 2-Cys peroxiredoxin BAS1 (56 aa).

Belongs to the peroxiredoxin family. AhpC/Prx1 subfamily. In terms of assembly, homodimer; disulfide-linked, upon oxidation.

Its subcellular location is the plastid. It localises to the chloroplast. It carries out the reaction a hydroperoxide + [thioredoxin]-dithiol = an alcohol + [thioredoxin]-disulfide + H2O. In terms of biological role, thiol-specific peroxidase that catalyzes the reduction of hydrogen peroxide and organic hydroperoxides to water and alcohols, respectively. Plays a role in cell protection against oxidative stress by detoxifying peroxides. May be an antioxidant enzyme particularly in the developing shoot and photosynthesizing leaf. The sequence is that of Putative 2-Cys peroxiredoxin BAS1 from Pinus strobus (Eastern white pine).